The sequence spans 49 residues: DNA-directed RNA polymerase subunit Rpo12 (49 aa).

3 residues coordinate Zn(2+): Cys11, Cys27, and Cys30.

Belongs to the archaeal Rpo12/eukaryotic RPC10 RNA polymerase subunit family. In terms of assembly, part of the RNA polymerase complex. Zn(2+) is required as a cofactor.

The protein localises to the cytoplasm. The catalysed reaction is RNA(n) + a ribonucleoside 5'-triphosphate = RNA(n+1) + diphosphate. In terms of biological role, DNA-dependent RNA polymerase (RNAP) catalyzes the transcription of DNA into RNA using the four ribonucleoside triphosphates as substrates. This is DNA-directed RNA polymerase subunit Rpo12 from Pyrococcus horikoshii (strain ATCC 700860 / DSM 12428 / JCM 9974 / NBRC 100139 / OT-3).